Here is a 257-residue protein sequence, read N- to C-terminus: Transmembrane protein 101 (257 aa).

8 helical membrane passes run 21–40, 52–72, 77–97, 110–130, 139–159, 182–202, 206–226, and 233–253; these read VLLTRCPFWGCFSQLMLYAE, VPYLYFDMGAAVLCASFMSFG, WFALGAALQLAISTYAAYIGG, YSRTVAIIGGFLVLASGAGEL, SLQSTGQVFLGIYLICVAYSL, LFFVLYGVLALAFLSGYYVTL, ILAVLLPPVMLLIDGNVAYWH, and FWNQMKLLGESVGIFGTAVIL.

The protein localises to the membrane. In terms of biological role, may activate NF-kappa-B signaling pathways. The sequence is that of Transmembrane protein 101 (TMEM101) from Pongo abelii (Sumatran orangutan).